Reading from the N-terminus, the 220-residue chain is Ribosomal RNA large subunit methyltransferase E (220 aa).

S-adenosyl-L-methionine is bound by residues glycine 60, tryptophan 62, aspartate 92, aspartate 108, and aspartate 133. Residue lysine 173 is the Proton acceptor of the active site. The segment at 195 to 220 (APRKPKASRDKSSETFILGRHLKQPR) is disordered.

The protein belongs to the class I-like SAM-binding methyltransferase superfamily. RNA methyltransferase RlmE family.

It is found in the cytoplasm. It carries out the reaction uridine(2552) in 23S rRNA + S-adenosyl-L-methionine = 2'-O-methyluridine(2552) in 23S rRNA + S-adenosyl-L-homocysteine + H(+). Functionally, specifically methylates the uridine in position 2552 of 23S rRNA at the 2'-O position of the ribose in the fully assembled 50S ribosomal subunit. The polypeptide is Ribosomal RNA large subunit methyltransferase E (Burkholderia pseudomallei (strain 1710b)).